The chain runs to 288 residues: Release factor glutamine methyltransferase (288 aa).

S-adenosyl-L-methionine-binding residues include D142 and N186. Substrate is bound at residue 186-189 (NPPY).

Belongs to the protein N5-glutamine methyltransferase family. PrmC subfamily.

It catalyses the reaction L-glutaminyl-[peptide chain release factor] + S-adenosyl-L-methionine = N(5)-methyl-L-glutaminyl-[peptide chain release factor] + S-adenosyl-L-homocysteine + H(+). In terms of biological role, methylates the class 1 translation termination release factors RF1/PrfA and RF2/PrfB on the glutamine residue of the universally conserved GGQ motif. This is Release factor glutamine methyltransferase from Mycobacterium leprae (strain TN).